The sequence spans 132 residues: Small ribosomal subunit protein uS11 (132 aa).

This sequence belongs to the universal ribosomal protein uS11 family. Part of the 30S ribosomal subunit. Interacts with proteins S7 and S18. Binds to IF-3.

Its function is as follows. Located on the platform of the 30S subunit, it bridges several disparate RNA helices of the 16S rRNA. Forms part of the Shine-Dalgarno cleft in the 70S ribosome. This chain is Small ribosomal subunit protein uS11, found in Leifsonia xyli subsp. xyli (strain CTCB07).